Consider the following 156-residue polypeptide: Ribonuclease H (156 aa).

The RNase H type-1 domain occupies 3–144 (ELKQIRIYTD…CDTLAREAAE (142 aa)). Mg(2+)-binding residues include Asp-12, Glu-50, Asp-72, and Asp-136.

This sequence belongs to the RNase H family. As to quaternary structure, monomer. Mg(2+) serves as cofactor.

It localises to the cytoplasm. It carries out the reaction Endonucleolytic cleavage to 5'-phosphomonoester.. Functionally, endonuclease that specifically degrades the RNA of RNA-DNA hybrids. The protein is Ribonuclease H of Shewanella amazonensis (strain ATCC BAA-1098 / SB2B).